A 242-amino-acid polypeptide reads, in one-letter code: Triosephosphate isomerase (242 aa).

8-10 is a substrate binding site; the sequence is NWK. Residue H91 is the Electrophile of the active site. Residue E155 is the Proton acceptor of the active site. Residues G161 and S192 each coordinate substrate.

It belongs to the triosephosphate isomerase family. Homodimer.

Its subcellular location is the cytoplasm. It catalyses the reaction D-glyceraldehyde 3-phosphate = dihydroxyacetone phosphate. It functions in the pathway carbohydrate biosynthesis; gluconeogenesis. Its pathway is carbohydrate degradation; glycolysis; D-glyceraldehyde 3-phosphate from glycerone phosphate: step 1/1. Involved in the gluconeogenesis. Catalyzes stereospecifically the conversion of dihydroxyacetone phosphate (DHAP) to D-glyceraldehyde-3-phosphate (G3P). The chain is Triosephosphate isomerase from Wolbachia pipientis wMel.